A 98-amino-acid chain; its full sequence is NADH-ubiquinone oxidoreductase chain 4L (98 aa).

3 consecutive transmembrane segments (helical) span residues 1–21, 29–49, and 61–81; these read MPSTYINILLAFTMALLGLLL, SLLCLEGLMLALFILSTLMAL, and IVLMVFAACEAALGLALLVMV.

Belongs to the complex I subunit 4L family. Core subunit of respiratory chain NADH dehydrogenase (Complex I) which is composed of 45 different subunits.

It localises to the mitochondrion inner membrane. The catalysed reaction is a ubiquinone + NADH + 5 H(+)(in) = a ubiquinol + NAD(+) + 4 H(+)(out). Its function is as follows. Core subunit of the mitochondrial membrane respiratory chain NADH dehydrogenase (Complex I) which catalyzes electron transfer from NADH through the respiratory chain, using ubiquinone as an electron acceptor. Part of the enzyme membrane arm which is embedded in the lipid bilayer and involved in proton translocation. The protein is NADH-ubiquinone oxidoreductase chain 4L (MT-ND4L) of Choloepus didactylus (Southern two-toed sloth).